The chain runs to 261 residues: ATP synthase subunit a (261 aa).

Transmembrane regions (helical) follow at residues 28-48 (AVHL…LTIF), 89-109 (IAPL…MDWV), 140-160 (NITF…SIKV), 203-223 (LFGN…IGVF), and 229-249 (FLWA…FMML).

Belongs to the ATPase A chain family. In terms of assembly, F-type ATPases have 2 components, CF(1) - the catalytic core - and CF(0) - the membrane proton channel. CF(1) has five subunits: alpha(3), beta(3), gamma(1), delta(1), epsilon(1). CF(0) has three main subunits: a(1), b(2) and c(9-12). The alpha and beta chains form an alternating ring which encloses part of the gamma chain. CF(1) is attached to CF(0) by a central stalk formed by the gamma and epsilon chains, while a peripheral stalk is formed by the delta and b chains.

It localises to the cell inner membrane. In terms of biological role, key component of the proton channel; it plays a direct role in the translocation of protons across the membrane. The sequence is that of ATP synthase subunit a from Colwellia psychrerythraea (strain 34H / ATCC BAA-681) (Vibrio psychroerythus).